The primary structure comprises 436 residues: GTPase Der (436 aa).

EngA-type G domains follow at residues 4 to 167 and 175 to 351; these read PTVA…PVEE and IRFS…ESQN. Residues 10-17, 57-61, 119-122, 181-188, 229-233, and 294-297 contribute to the GTP site; these read GRPNVGKS, DTGGI, NKVD, DTAGM, and NKWD. A KH-like domain is found at 352–436; sequence KRIPSAVLND…PIHLIARKRK (85 aa).

The protein belongs to the TRAFAC class TrmE-Era-EngA-EngB-Septin-like GTPase superfamily. EngA (Der) GTPase family. In terms of assembly, associates with the 50S ribosomal subunit.

GTPase that plays an essential role in the late steps of ribosome biogenesis. The chain is GTPase Der from Streptococcus uberis (strain ATCC BAA-854 / 0140J).